A 662-amino-acid polypeptide reads, in one-letter code: Glycogen debranching enzyme (662 aa).

The active-site Nucleophile is the Asp-338. Glu-373 serves as the catalytic Proton donor.

The protein belongs to the glycosyl hydrolase 13 family.

The catalysed reaction is Hydrolysis of (1-&gt;6)-alpha-D-glucosidic linkages to branches with degrees of polymerization of three or four glucose residues in limit dextrin.. It functions in the pathway glycan degradation; glycogen degradation. Its function is as follows. Removes maltotriose and maltotetraose chains that are attached by 1,6-alpha-linkage to the limit dextrin main chain, generating a debranched limit dextrin. This Yersinia pestis bv. Antiqua (strain Angola) protein is Glycogen debranching enzyme.